The chain runs to 122 residues: Small ribosomal subunit protein uS13 (122 aa).

Residues 95 to 122 (QLPVRGQRTHTNARTRKGKAKPIAGKKK) form a disordered region.

Belongs to the universal ribosomal protein uS13 family. In terms of assembly, part of the 30S ribosomal subunit. Forms a loose heterodimer with protein S19. Forms two bridges to the 50S subunit in the 70S ribosome.

Its function is as follows. Located at the top of the head of the 30S subunit, it contacts several helices of the 16S rRNA. In the 70S ribosome it contacts the 23S rRNA (bridge B1a) and protein L5 of the 50S subunit (bridge B1b), connecting the 2 subunits; these bridges are implicated in subunit movement. Contacts the tRNAs in the A and P-sites. In Beijerinckia indica subsp. indica (strain ATCC 9039 / DSM 1715 / NCIMB 8712), this protein is Small ribosomal subunit protein uS13.